Reading from the N-terminus, the 279-residue chain is uncharacterized protein (279 aa).

This is an uncharacterized protein from Caenorhabditis elegans.